The chain runs to 107 residues: Phosphoribosyl-ATP pyrophosphatase (107 aa).

It belongs to the PRA-PH family.

The protein resides in the cytoplasm. It catalyses the reaction 1-(5-phospho-beta-D-ribosyl)-ATP + H2O = 1-(5-phospho-beta-D-ribosyl)-5'-AMP + diphosphate + H(+). It functions in the pathway amino-acid biosynthesis; L-histidine biosynthesis; L-histidine from 5-phospho-alpha-D-ribose 1-diphosphate: step 2/9. The chain is Phosphoribosyl-ATP pyrophosphatase from Caulobacter sp. (strain K31).